Here is a 909-residue protein sequence, read N- to C-terminus: E3 ubiquitin-protein ligase HACE1 (909 aa).

An N-terminal helix important for homodimerization region spans residues 1 to 21; the sequence is MERAMEQLNRLTRSLRRARTV. ANK repeat units follow at residues 23 to 55, 64 to 93, 97 to 126, 130 to 159, 163 to 192, 196 to 226, and 228 to 253; these read LPED…NSKF, VKRS…NPNY, SGCT…DVNI, EGLT…DVDV, MGQT…DINR, SGAT…YLPD, and NGVT…QYHP. Residues 398–433 form a disordered region; the sequence is QDQEAPSLSAFEPPGPGSYESLPPGPGDSKPEVLAG. One can recognise an HECT domain in the interval 574 to 909; sequence NCAKLKQGIA…HCGSYGYTMA (336 aa). The active-site Glycyl thioester intermediate is Cys876.

As to quaternary structure, homodimer. The homodimer is autoinhibited and stabilized by its N-terminal helix. Interacts with RAB1 (RAB1A, RAB1B or RAB1C), RAB4 (RAB4A or RAB4B) and RAB11 (RAB11A or RAB11B); in a GTP-dependent manner. Interacts with the 26S proteasomal complex through the 20S core proteasomal subunit. Interacts with RARB. In terms of processing, autoubiquitinated.

Its subcellular location is the golgi apparatus. The protein localises to the golgi stack membrane. It localises to the cytoplasm. The protein resides in the endoplasmic reticulum. The catalysed reaction is S-ubiquitinyl-[E2 ubiquitin-conjugating enzyme]-L-cysteine + [acceptor protein]-L-lysine = [E2 ubiquitin-conjugating enzyme]-L-cysteine + N(6)-ubiquitinyl-[acceptor protein]-L-lysine.. It functions in the pathway protein modification; protein ubiquitination. Its activity is regulated as follows. Sterically autoinhibited in its dimeric state. In terms of biological role, E3 ubiquitin-protein ligase involved in Golgi membrane fusion and regulation of small GTPases. Acts as a regulator of Golgi membrane dynamics during the cell cycle: recruited to Golgi membrane by Rab proteins and regulates postmitotic Golgi membrane fusion. Acts by mediating ubiquitination during mitotic Golgi disassembly, ubiquitination serving as a signal for Golgi reassembly later, after cell division. Specifically binds GTP-bound RAC1, mediating ubiquitination and subsequent degradation of active RAC1, thereby playing a role in host defense against pathogens. May also act as a transcription regulator via its interaction with RARB. This Mus musculus (Mouse) protein is E3 ubiquitin-protein ligase HACE1 (Hace1).